A 428-amino-acid polypeptide reads, in one-letter code: Putative UDP-glucose 6-dehydrogenase YtcA (428 aa).

The N-terminal stretch at 1 to 23 (MKICVVGAGYVGLTLSAALASIG) is a signal peptide. NAD(+)-binding positions include 2 to 19 (KICV…SAAL), valine 11, aspartate 30, lysine 35, threonine 118, and glutamate 152. Substrate-binding positions include 148–152 (EFLRE), lysine 203, asparagine 207, 248–252 (FLQAG), and glycine 256. The active-site Nucleophile is the cysteine 259. Lysine 262 contacts NAD(+). A substrate-binding site is contributed by lysine 319. Arginine 326 serves as a coordination point for NAD(+).

The protein belongs to the UDP-glucose/GDP-mannose dehydrogenase family.

The enzyme catalyses UDP-alpha-D-glucose + 2 NAD(+) + H2O = UDP-alpha-D-glucuronate + 2 NADH + 3 H(+). It functions in the pathway nucleotide-sugar biosynthesis; UDP-alpha-D-glucuronate biosynthesis; UDP-alpha-D-glucuronate from UDP-alpha-D-glucose: step 1/1. Its function is as follows. Catalyzes the conversion of UDP-glucose into UDP-glucuronate, one of the precursors of teichuronic acid. The polypeptide is Putative UDP-glucose 6-dehydrogenase YtcA (ytcA) (Bacillus subtilis (strain 168)).